Here is a 395-residue protein sequence, read N- to C-terminus: Endophilin-B2 (395 aa).

An N-acetylmethionine modification is found at methionine 1. Residues 1–27 form a membrane-binding amphipathic helix region; sequence MDFNMKKLASDAGIFFTRAVQFTEEKF. Serine 10 carries the post-translational modification Phosphoserine. The 264-residue stretch at 24–287 folds into the BAR domain; that stretch reads EEKFGQAEKT…LGRFPGTFVG (264 aa). 2 coiled-coil regions span residues 116–132 and 206–240; these read IKVA…ERDF and ASAL…LLLE. The region spanning 335-395 is the SH3 domain; it reads SGTRKARVLY…VPVTYLELLS (61 aa). The residue at position 395 (serine 395) is a Phosphoserine.

The protein belongs to the endophilin family. As to quaternary structure, homodimer, and heterodimer with SH3GLB1. In terms of tissue distribution, detected in skeletal muscle, adipocyte, brain, lung, colon and mammary gland.

The protein localises to the cytoplasm. The protein is Endophilin-B2 (SH3GLB2) of Homo sapiens (Human).